We begin with the raw amino-acid sequence, 190 residues long: Threonylcarbamoyl-AMP synthase (190 aa).

In terms of domain architecture, YrdC-like spans 7-190 (SEAVAHAVAV…ALTGELFRQG (184 aa)).

This sequence belongs to the SUA5 family. TsaC subfamily.

Its subcellular location is the cytoplasm. It catalyses the reaction L-threonine + hydrogencarbonate + ATP = L-threonylcarbamoyladenylate + diphosphate + H2O. Required for the formation of a threonylcarbamoyl group on adenosine at position 37 (t(6)A37) in tRNAs that read codons beginning with adenine. Catalyzes the conversion of L-threonine, HCO(3)(-)/CO(2) and ATP to give threonylcarbamoyl-AMP (TC-AMP) as the acyladenylate intermediate, with the release of diphosphate. The sequence is that of Threonylcarbamoyl-AMP synthase from Klebsiella pneumoniae subsp. pneumoniae (strain ATCC 700721 / MGH 78578).